A 286-amino-acid chain; its full sequence is Alpha-ketoglutarate-dependent dioxygenase alkB homolog 3 (286 aa).

Residues 21–45 (QAIAQPATTAKSHLHQKPGQTWKNK) form a disordered region. Over residues 22-31 (AIAQPATTAK) the composition is skewed to polar residues. Substrate-binding positions include Trp115 and 141–143 (YTY). One can recognise a Fe2OG dioxygenase domain in the interval 172-278 (TFNSLLCNLY…RVNLTFRTVY (107 aa)). Position 177 is a (4R)-5-hydroxyleucine; alternate (Leu177). Leu177 carries the post-translational modification (4R)-5-oxoleucine; alternate. A 2-oxoglutarate-binding site is contributed by 179–181 (NLY). Residues His191 and Asp193 each coordinate Fe cation. Residue Asp194 coordinates substrate. Residue His257 coordinates Fe cation. 2-oxoglutarate contacts are provided by residues 269–275 (RVNLTFR) and Arg275.

It belongs to the alkB family. In terms of assembly, interacts with the ASCC complex composed of ASCC1, ASCC2 and ASCC3. Interacts directly with ASCC3, and is thereby recruited to the ASCC complex. Interacts with OTUD4; the interaction is direct. Interacts with USP7 and USP9X. Fe(2+) serves as cofactor. Post-translationally, ubiquitinated; undergoes 'Lys-48'-linked polyubiquitination. OTUD4 promotes USP7 and USP9X-dependent deubiquitination of 'Lys-48'-polyubiquitinated ALKBH3 promoting the repair of alkylated DNA lesions. As to expression, ubiquitous. Detected in heart, pancreas, skeletal muscle, thymus, testis, ovary, spleen, prostate, small intestine, peripheral blood leukocytes, urinary bladder and colon.

The protein localises to the nucleus. Its subcellular location is the cytoplasm. The catalysed reaction is an N(1)-methyladenosine in mRNA + 2-oxoglutarate + O2 = an adenosine in mRNA + formaldehyde + succinate + CO2. It carries out the reaction a methylated nucleobase within DNA + 2-oxoglutarate + O2 = a nucleobase within DNA + formaldehyde + succinate + CO2. The enzyme catalyses an N(1)-methyl-2'-deoxyadenosine in single-stranded DNA + 2-oxoglutarate + O2 = a 2'-deoxyadenosine in single-stranded DNA + formaldehyde + succinate + CO2 + H(+). It catalyses the reaction an N(3)-methyl-2'-deoxycytidine in single-stranded DNA + 2-oxoglutarate + O2 = a 2'-deoxycytidine in single-stranded DNA + formaldehyde + succinate + CO2 + H(+). The catalysed reaction is a 3,N(4)-etheno-2'-deoxycytidine in single-stranded DNA + 2-oxoglutarate + O2 + H2O = a 2'-deoxycytidine in single-stranded DNA + glyoxal + succinate + CO2. With respect to regulation, activated by ascorbate. Its function is as follows. Dioxygenase that mediates demethylation of DNA and RNA containing 1-methyladenosine (m1A). Repairs alkylated DNA containing 1-methyladenosine (m1A) and 3-methylcytosine (m3C) by oxidative demethylation. Has a strong preference for single-stranded DNA. Able to process alkylated m3C within double-stranded regions via its interaction with ASCC3, which promotes DNA unwinding to generate single-stranded substrate needed for ALKBH3. Can repair exocyclic 3,N4-ethenocytosine adducs in single-stranded DNA. Also acts on RNA. Demethylates N(1)-methyladenosine (m1A) RNA, an epigenetic internal modification of messenger RNAs (mRNAs) highly enriched within 5'-untranslated regions (UTRs) and in the vicinity of start codons. Requires molecular oxygen, alpha-ketoglutarate and iron. In Homo sapiens (Human), this protein is Alpha-ketoglutarate-dependent dioxygenase alkB homolog 3.